The following is a 237-amino-acid chain: Ribose-5-phosphate isomerase A (237 aa).

Substrate contacts are provided by residues 30–33 (SGST), 87–90 (DGAD), and 100–103 (KGGG). The active-site Proton acceptor is the E109. Residue K127 participates in substrate binding.

The protein belongs to the ribose 5-phosphate isomerase family. As to quaternary structure, homodimer.

It carries out the reaction aldehydo-D-ribose 5-phosphate = D-ribulose 5-phosphate. Its pathway is carbohydrate degradation; pentose phosphate pathway; D-ribose 5-phosphate from D-ribulose 5-phosphate (non-oxidative stage): step 1/1. Functionally, catalyzes the reversible conversion of ribose-5-phosphate to ribulose 5-phosphate. The protein is Ribose-5-phosphate isomerase A of Prochlorococcus marinus (strain MIT 9211).